A 289-amino-acid polypeptide reads, in one-letter code: ATP synthase subunit a (289 aa).

6 helical membrane-spanning segments follow: residues 43–63 (AFHVDTLGWSVALGLIFVLLF), 103–123 (VIAPLALTIFVWVFLMNAVDL), 160–180 (FSVFALIIFYSIKVKGLGGFI), 193–213 (IFVQALLIPVNFLLEFVTLIA), 232–252 (VFILIAVMFGSGLLWLSGLGV), and 259–279 (AVFHILIITLQAFIFMMLTIV).

Belongs to the ATPase A chain family. As to quaternary structure, F-type ATPases have 2 components, CF(1) - the catalytic core - and CF(0) - the membrane proton channel. CF(1) has five subunits: alpha(3), beta(3), gamma(1), delta(1), epsilon(1). CF(0) has three main subunits: a(1), b(2) and c(9-12). The alpha and beta chains form an alternating ring which encloses part of the gamma chain. CF(1) is attached to CF(0) by a central stalk formed by the gamma and epsilon chains, while a peripheral stalk is formed by the delta and b chains.

It is found in the cell inner membrane. In terms of biological role, key component of the proton channel; it plays a direct role in the translocation of protons across the membrane. The chain is ATP synthase subunit a from Pseudomonas fluorescens (strain Pf0-1).